The following is a 45-amino-acid chain: Photosystem II reaction center protein K (45 aa).

Positions 1–8 are excised as a propeptide; it reads MEAVFLLA. The chain crosses the membrane as a helical span at residues 24-44; sequence LPVIPVFFLALAFVWQAAVGF.

This sequence belongs to the PsbK family. As to quaternary structure, PSII is composed of 1 copy each of membrane proteins PsbA, PsbB, PsbC, PsbD, PsbE, PsbF, PsbH, PsbI, PsbJ, PsbK, PsbL, PsbM, PsbT, PsbX, PsbY, PsbZ, Psb30/Ycf12, peripheral proteins PsbO, CyanoQ (PsbQ), PsbU, PsbV and a large number of cofactors. It forms dimeric complexes.

It is found in the cellular thylakoid membrane. In terms of biological role, one of the components of the core complex of photosystem II (PSII). PSII is a light-driven water:plastoquinone oxidoreductase that uses light energy to abstract electrons from H(2)O, generating O(2) and a proton gradient subsequently used for ATP formation. It consists of a core antenna complex that captures photons, and an electron transfer chain that converts photonic excitation into a charge separation. In Crocosphaera subtropica (strain ATCC 51142 / BH68) (Cyanothece sp. (strain ATCC 51142)), this protein is Photosystem II reaction center protein K.